The following is a 406-amino-acid chain: Testis-specific Y-encoded-like protein 4 (406 aa).

Disordered regions lie at residues 1–63 (MNGV…EHCG), 81–121 (GLED…AKPK), 161–189 (EAGAAMQEKKGLQKEKKVAGGGKEETRPR), and 387–406 (VRVPPRQPVESPRSFRFQSG). Residues 8-20 (NELSLANTTTPSH) show a composition bias toward polar residues. The segment covering 93 to 102 (DAPSAPVAAD) has biased composition (low complexity). The segment covering 167–188 (QEKKGLQKEKKVAGGGKEETRP) has biased composition (basic and acidic residues).

The protein belongs to the nucleosome assembly protein (NAP) family.

The protein is Testis-specific Y-encoded-like protein 4 (Tspyl4) of Mus musculus (Mouse).